The following is a 76-amino-acid chain: MKLVLAIVVILMLLSLSTGAEMSDNHASMSANALRDRLLGPKALLCGGTHARCNRDNDCCGSLCCFGTCISAFVPC.

An N-terminal signal peptide occupies residues 1–19; sequence MKLVLAIVVILMLLSLSTG. The propeptide occupies 20–42; that stretch reads AEMSDNHASMSANALRDRLLGPK. 4 cysteine pairs are disulfide-bonded: cysteine 46-cysteine 60, cysteine 53-cysteine 65, cysteine 59-cysteine 69, and cysteine 64-cysteine 76.

Expressed by the venom duct.

The protein resides in the secreted. The protein is Conotoxin Ca11b of Conus caracteristicus (Characteristic cone).